The primary structure comprises 240 residues: MILLISDLHLQEERPDISRAFLDLLDGRARHAKALYILGDFFEAWIGDDAMTPFQQSICQAMRRLSDSGTAIYLMHGNRDFLIGQAFCDAAGCTLLSDPSVIELGGEQVLLMHGDTLCTRDLGYMKMRRLLRNPLSLWILRHLPLSARYKLARKLRSESRTQVRMKSTEIVDVTPEEVPKVMAAHGVRTLVHGHTHRPAIHKLVVDGQPARRIVLGDWDRRGWALQVDEQGFQLAPFEFS.

D7, H9, D40, N78, and H113 together coordinate Mn(2+). Position 78–79 (78–79 (NR)) interacts with substrate. Residues D121, S159, K166, and H194 each coordinate substrate. The Mn(2+) site is built by H194 and H196.

The protein belongs to the LpxH family. Requires Mn(2+) as cofactor.

Its subcellular location is the cell inner membrane. The catalysed reaction is UDP-2-N,3-O-bis[(3R)-3-hydroxytetradecanoyl]-alpha-D-glucosamine + H2O = 2-N,3-O-bis[(3R)-3-hydroxytetradecanoyl]-alpha-D-glucosaminyl 1-phosphate + UMP + 2 H(+). It functions in the pathway glycolipid biosynthesis; lipid IV(A) biosynthesis; lipid IV(A) from (3R)-3-hydroxytetradecanoyl-[acyl-carrier-protein] and UDP-N-acetyl-alpha-D-glucosamine: step 4/6. In terms of biological role, hydrolyzes the pyrophosphate bond of UDP-2,3-diacylglucosamine to yield 2,3-diacylglucosamine 1-phosphate (lipid X) and UMP by catalyzing the attack of water at the alpha-P atom. Involved in the biosynthesis of lipid A, a phosphorylated glycolipid that anchors the lipopolysaccharide to the outer membrane of the cell. In Pseudomonas putida (strain ATCC 700007 / DSM 6899 / JCM 31910 / BCRC 17059 / LMG 24140 / F1), this protein is UDP-2,3-diacylglucosamine hydrolase.